A 547-amino-acid polypeptide reads, in one-letter code: Chaperonin GroEL (547 aa).

Residues 30 to 33, lysine 51, 87 to 91, glycine 415, and aspartate 495 contribute to the ATP site; these read TLGP and DGTTT.

Belongs to the chaperonin (HSP60) family. As to quaternary structure, forms a cylinder of 14 subunits composed of two heptameric rings stacked back-to-back. Interacts with the co-chaperonin GroES.

Its subcellular location is the cytoplasm. It carries out the reaction ATP + H2O + a folded polypeptide = ADP + phosphate + an unfolded polypeptide.. In terms of biological role, together with its co-chaperonin GroES, plays an essential role in assisting protein folding. The GroEL-GroES system forms a nano-cage that allows encapsulation of the non-native substrate proteins and provides a physical environment optimized to promote and accelerate protein folding. The protein is Chaperonin GroEL of Shewanella halifaxensis (strain HAW-EB4).